The following is a 65-amino-acid chain: Gene product 5B (65 aa).

This sequence belongs to the phi29likevirus GP5.5 family.

The sequence is that of Gene product 5B (5B) from Bacillus subtilis (Bacteriophage PZA).